The sequence spans 273 residues: Ribonuclease Z (273 aa).

5 residues coordinate Zn(2+): His-61, His-63, His-146, Asp-169, and His-233.

The protein belongs to the RNase Z family. As to quaternary structure, homodimer. Zn(2+) is required as a cofactor.

It carries out the reaction Endonucleolytic cleavage of RNA, removing extra 3' nucleotides from tRNA precursor, generating 3' termini of tRNAs. A 3'-hydroxy group is left at the tRNA terminus and a 5'-phosphoryl group is left at the trailer molecule.. Its function is as follows. Zinc phosphodiesterase, which displays some tRNA 3'-processing endonuclease activity. Probably involved in tRNA maturation, by removing a 3'-trailer from precursor tRNA. This chain is Ribonuclease Z, found in Mycobacterium tuberculosis (strain ATCC 25177 / H37Ra).